The chain runs to 260 residues: NH(3)-dependent NAD(+) synthetase (260 aa).

An ATP-binding site is contributed by 31-38; it reads GLSGGLDS. Asp-37 is a Mg(2+) binding site. Residue Arg-112 participates in deamido-NAD(+) binding. ATP is bound at residue Thr-132. Residue Glu-137 participates in Mg(2+) binding. 2 residues coordinate ATP: Lys-161 and Ser-183.

It belongs to the NAD synthetase family. Homodimer.

The enzyme catalyses deamido-NAD(+) + NH4(+) + ATP = AMP + diphosphate + NAD(+) + H(+). Its pathway is cofactor biosynthesis; NAD(+) biosynthesis; NAD(+) from deamido-NAD(+) (ammonia route): step 1/1. Catalyzes the ATP-dependent amidation of deamido-NAD to form NAD. Uses ammonia as a nitrogen source. The protein is NH(3)-dependent NAD(+) synthetase of Helicobacter pylori (strain G27).